The chain runs to 145 residues: Major pollen allergen Lig v 1 (145 aa).

3 disulfide bridges follow: cysteine 19–cysteine 90, cysteine 22–cysteine 131, and cysteine 43–cysteine 78. Asparagine 111 carries N-linked (GlcNAc...) asparagine glycosylation.

The protein belongs to the Ole e I family.

Its subcellular location is the secreted. This is Major pollen allergen Lig v 1 from Ligustrum vulgare (Common privet).